Here is a 354-residue protein sequence, read N- to C-terminus: Quinone-reactive Ni/Fe-hydrogenase small chain (354 aa).

Positions 1-36 (MLEEKGIERRDFMKWAGAMTAMLSLPATFTPLTAKA) form a signal peptide, tat-type signal. [4Fe-4S] cluster-binding residues include cysteine 53, cysteine 56, cysteine 153, cysteine 186, histidine 224, cysteine 227, cysteine 252, and cysteine 258. [3Fe-4S] cluster-binding residues include cysteine 267, cysteine 286, and cysteine 289.

Belongs to the [NiFe]/[NiFeSe] hydrogenase small subunit family. In terms of assembly, heterodimer of a large and a small subunit. [4Fe-4S] cluster is required as a cofactor. [3Fe-4S] cluster serves as cofactor. In terms of processing, predicted to be exported by the Tat system. The position of the signal peptide cleavage has been experimentally proven.

Its subcellular location is the cell membrane. The catalysed reaction is H2 + a menaquinone = a menaquinol. This Wolinella succinogenes (strain ATCC 29543 / DSM 1740 / CCUG 13145 / JCM 31913 / LMG 7466 / NCTC 11488 / FDC 602W) (Vibrio succinogenes) protein is Quinone-reactive Ni/Fe-hydrogenase small chain (hydA).